A 101-amino-acid chain; its full sequence is A-type ATP synthase subunit F (101 aa).

It belongs to the V-ATPase F subunit family. In terms of assembly, has multiple subunits with at least A(3), B(3), C, D, E, F, H, I and proteolipid K(x).

Its subcellular location is the cell membrane. Its function is as follows. Component of the A-type ATP synthase that produces ATP from ADP in the presence of a proton gradient across the membrane. This Methanosarcina acetivorans (strain ATCC 35395 / DSM 2834 / JCM 12185 / C2A) protein is A-type ATP synthase subunit F.